The following is a 225-amino-acid chain: Ribosomal RNA large subunit methyltransferase E (225 aa).

5 residues coordinate S-adenosyl-L-methionine: Gly79, Trp81, Asp97, Asp113, and Asp137. Lys177 functions as the Proton acceptor in the catalytic mechanism.

The protein belongs to the class I-like SAM-binding methyltransferase superfamily. RNA methyltransferase RlmE family.

It is found in the cytoplasm. It catalyses the reaction uridine(2552) in 23S rRNA + S-adenosyl-L-methionine = 2'-O-methyluridine(2552) in 23S rRNA + S-adenosyl-L-homocysteine + H(+). Functionally, specifically methylates the uridine in position 2552 of 23S rRNA at the 2'-O position of the ribose in the fully assembled 50S ribosomal subunit. The protein is Ribosomal RNA large subunit methyltransferase E of Acidiphilium cryptum (strain JF-5).